A 422-amino-acid chain; its full sequence is Serine hydroxymethyltransferase (422 aa).

Residues leucine 118 and 122–124 (GHL) each bind (6S)-5,6,7,8-tetrahydrofolate. Lysine 227 is modified (N6-(pyridoxal phosphate)lysine). (6S)-5,6,7,8-tetrahydrofolate-binding positions include glutamate 243 and 351-353 (SPF).

Belongs to the SHMT family. In terms of assembly, homodimer. Pyridoxal 5'-phosphate serves as cofactor.

It localises to the cytoplasm. It carries out the reaction (6R)-5,10-methylene-5,6,7,8-tetrahydrofolate + glycine + H2O = (6S)-5,6,7,8-tetrahydrofolate + L-serine. It participates in one-carbon metabolism; tetrahydrofolate interconversion. Its pathway is amino-acid biosynthesis; glycine biosynthesis; glycine from L-serine: step 1/1. Its function is as follows. Catalyzes the reversible interconversion of serine and glycine with tetrahydrofolate (THF) serving as the one-carbon carrier. This reaction serves as the major source of one-carbon groups required for the biosynthesis of purines, thymidylate, methionine, and other important biomolecules. Also exhibits THF-independent aldolase activity toward beta-hydroxyamino acids, producing glycine and aldehydes, via a retro-aldol mechanism. The chain is Serine hydroxymethyltransferase from Kosmotoga olearia (strain ATCC BAA-1733 / DSM 21960 / TBF 19.5.1).